The chain runs to 510 residues: MRALLSVSDKEGIVEFGKELENLGFEILSTGGTFKFLKENGIKVMEVSDFTKSPELFEGRVKTLHPKIHGGILHKRSNENHIKQAKENEILGIDLVCVNLYPFKKTTIMSDDFDEIIENIDIGGPAMIRSAAKNYKDVMVLCDPLDYEKVIETLKKGQIDENFRLNLMIKAYEHTANYDAYIANYMNERFNGGFGASKFIVGQKVFDTKYGENPHQKGALYEFDAFFSANFKALKGEASFNNLTDINAALNLASSFDKAPAIAIVKHGNPCGFAIKENLVQSYIHALKCDSVSAYGGVVAINGTLDEALANKINEIYVEVIIAANVDEKALAVFEGKKRIKIFTQESSFLIRSFDKYDFKHIDGGFVYQNSDEVGEDEFKNAKLMSQREASKEELKDLEIAMKIAAFTKSNNVVYVKNGAMVAIGMGMTSRIDAAKVAIAKAKEMGLDLQGCVLASEAFFPFRDSIDEASKVGVKAIVEPGGSIRDDEVVKAADEYGMALYFTGVRHFLH.

One can recognise an MGS-like domain in the interval 1 to 142 (MRALLSVSDK…KNYKDVMVLC (142 aa)).

This sequence belongs to the PurH family.

The catalysed reaction is (6R)-10-formyltetrahydrofolate + 5-amino-1-(5-phospho-beta-D-ribosyl)imidazole-4-carboxamide = 5-formamido-1-(5-phospho-D-ribosyl)imidazole-4-carboxamide + (6S)-5,6,7,8-tetrahydrofolate. The enzyme catalyses IMP + H2O = 5-formamido-1-(5-phospho-D-ribosyl)imidazole-4-carboxamide. It functions in the pathway purine metabolism; IMP biosynthesis via de novo pathway; 5-formamido-1-(5-phospho-D-ribosyl)imidazole-4-carboxamide from 5-amino-1-(5-phospho-D-ribosyl)imidazole-4-carboxamide (10-formyl THF route): step 1/1. Its pathway is purine metabolism; IMP biosynthesis via de novo pathway; IMP from 5-formamido-1-(5-phospho-D-ribosyl)imidazole-4-carboxamide: step 1/1. The sequence is that of Bifunctional purine biosynthesis protein PurH from Campylobacter jejuni (strain RM1221).